The chain runs to 289 residues: ATP synthase gamma chain (289 aa).

This sequence belongs to the ATPase gamma chain family. In terms of assembly, F-type ATPases have 2 components, CF(1) - the catalytic core - and CF(0) - the membrane proton channel. CF(1) has five subunits: alpha(3), beta(3), gamma(1), delta(1), epsilon(1). CF(0) has three main subunits: a, b and c.

It localises to the cell inner membrane. Its function is as follows. Produces ATP from ADP in the presence of a proton gradient across the membrane. The gamma chain is believed to be important in regulating ATPase activity and the flow of protons through the CF(0) complex. In Haemophilus influenzae (strain PittGG), this protein is ATP synthase gamma chain.